Reading from the N-terminus, the 463-residue chain is UDP-glucosyltransferase A1 (463 aa).

Belongs to the UDP-glycosyltransferase family.

The enzyme catalyses 18-hydroxy-(9Z)-octadecenoate + UDP-alpha-D-glucose = (9Z)-18-hydroxyoctadec-9-enoate 18-O-beta-D-glucoside + UDP + H(+). It carries out the reaction 17-hydroxy-(9Z)-octadecenoate + UDP-alpha-D-glucose = (9Z)-17-hydroxyoctadec-9-enoate 17-O-beta-D-glucoside + UDP + H(+). Functionally, catalyzes the first glycosylation step of sophorolipid biosynthesis, the coupling of glucose to a hydroxylated fatty acid to give rise to a glucolipid. Can glycosylate all hydroxyl fatty acids generated by cytochrome P450 monooxygenases CYP52M1, CYP52N1 and CYP52E3 into their corresponding glucolipids. Main products are 17-O- and 18-O-(beta-D-glucopyranosyl)-octadecenoic acids. In Starmerella bombicola (Yeast), this protein is UDP-glucosyltransferase A1.